The chain runs to 182 residues: Large ribosomal subunit protein uL16 (182 aa).

The protein belongs to the universal ribosomal protein uL16 family.

In Pyrobaculum islandicum (strain DSM 4184 / JCM 9189 / GEO3), this protein is Large ribosomal subunit protein uL16.